The following is a 352-amino-acid chain: UDP-N-acetylglucosamine--N-acetylmuramyl-(pentapeptide) pyrophosphoryl-undecaprenol N-acetylglucosamine transferase (352 aa).

UDP-N-acetyl-alpha-D-glucosamine contacts are provided by residues 13-15 (TGG), Asn125, Arg161, Ser189, Ile242, 261-266 (ALTVSE), and Gln286.

The protein belongs to the glycosyltransferase 28 family. MurG subfamily.

The protein localises to the cell inner membrane. The enzyme catalyses di-trans,octa-cis-undecaprenyl diphospho-N-acetyl-alpha-D-muramoyl-L-alanyl-D-glutamyl-meso-2,6-diaminopimeloyl-D-alanyl-D-alanine + UDP-N-acetyl-alpha-D-glucosamine = di-trans,octa-cis-undecaprenyl diphospho-[N-acetyl-alpha-D-glucosaminyl-(1-&gt;4)]-N-acetyl-alpha-D-muramoyl-L-alanyl-D-glutamyl-meso-2,6-diaminopimeloyl-D-alanyl-D-alanine + UDP + H(+). It participates in cell wall biogenesis; peptidoglycan biosynthesis. Functionally, cell wall formation. Catalyzes the transfer of a GlcNAc subunit on undecaprenyl-pyrophosphoryl-MurNAc-pentapeptide (lipid intermediate I) to form undecaprenyl-pyrophosphoryl-MurNAc-(pentapeptide)GlcNAc (lipid intermediate II). This is UDP-N-acetylglucosamine--N-acetylmuramyl-(pentapeptide) pyrophosphoryl-undecaprenol N-acetylglucosamine transferase from Erwinia tasmaniensis (strain DSM 17950 / CFBP 7177 / CIP 109463 / NCPPB 4357 / Et1/99).